A 670-amino-acid polypeptide reads, in one-letter code: DNA ligase (670 aa).

NAD(+) is bound by residues 31–35 (DAEYD), 76–77 (SL), and Glu108. The active-site N6-AMP-lysine intermediate is the Lys110. NAD(+)-binding residues include Arg131, Glu166, Lys271, and Lys295. Zn(2+) is bound by residues Cys388, Cys391, Cys406, and Cys412. Residues 579 to 668 (NIGGSLSGKK…NTPALKKETS (90 aa)) form the BRCT domain.

It belongs to the NAD-dependent DNA ligase family. LigA subfamily. Mg(2+) is required as a cofactor. Mn(2+) serves as cofactor.

The catalysed reaction is NAD(+) + (deoxyribonucleotide)n-3'-hydroxyl + 5'-phospho-(deoxyribonucleotide)m = (deoxyribonucleotide)n+m + AMP + beta-nicotinamide D-nucleotide.. In terms of biological role, DNA ligase that catalyzes the formation of phosphodiester linkages between 5'-phosphoryl and 3'-hydroxyl groups in double-stranded DNA using NAD as a coenzyme and as the energy source for the reaction. It is essential for DNA replication and repair of damaged DNA. This chain is DNA ligase, found in Neorickettsia sennetsu (strain ATCC VR-367 / Miyayama) (Ehrlichia sennetsu).